The primary structure comprises 546 residues: Cytochrome P450 monooxygenase alnH (546 aa).

The chain crosses the membrane as a helical span at residues 11–31 (VPYSVPLLGSTVVILIGFIAI). N-linked (GlcNAc...) asparagine glycosylation is found at Asn146, Asn258, and Asn425. Cys445 lines the heme pocket.

Belongs to the cytochrome P450 family. It depends on heme as a cofactor.

It localises to the membrane. The protein operates within polyketide biosynthesis. Functionally, cytochrome P450 monooxygenase; part of the gene cluster that mediates the biosynthesis of asperlin, a polyketide showing anti-inflammatory, antitumor and antibiotic activities. The first step of the asperlin biosynthesis is the production of the intermediate 2,4,6-octatrienoic acid by the highly redusing polyketide synthase alnA with cleavage of the PKS product by the esterase alnB. 2,4,6-octatrienoic acid is further converted to asperlin via several steps involving the remaining enzymes from the cluster. The chain is Cytochrome P450 monooxygenase alnH from Emericella nidulans (strain FGSC A4 / ATCC 38163 / CBS 112.46 / NRRL 194 / M139) (Aspergillus nidulans).